A 128-amino-acid chain; its full sequence is Holo-[acyl-carrier-protein] synthase (128 aa).

2 residues coordinate Mg(2+): aspartate 8 and glutamate 60.

This sequence belongs to the P-Pant transferase superfamily. AcpS family. It depends on Mg(2+) as a cofactor.

It localises to the cytoplasm. It carries out the reaction apo-[ACP] + CoA = holo-[ACP] + adenosine 3',5'-bisphosphate + H(+). Functionally, transfers the 4'-phosphopantetheine moiety from coenzyme A to a Ser of acyl-carrier-protein. The chain is Holo-[acyl-carrier-protein] synthase from Anaeromyxobacter sp. (strain K).